The chain runs to 249 residues: Sec-independent protein translocase protein TatC (249 aa).

6 consecutive transmembrane segments (helical) span residues 18 to 38 (VSVGTILVAFLGCFHFWKNIF), 69 to 89 (AIVISMPIIFWQLWLFIAPGL), 96 to 116 (VILPFVFFGSGMFLMGAAFSY), 151 to 171 (LILGFGVAFELPVLAYFLAKV), 187 to 207 (IVVIFIVAAIITPPDVVSQIF), and 208 to 228 (MALPLVGLYGLSILIAKMVNP).

This sequence belongs to the TatC family. The Tat system comprises two distinct complexes: a TatABC complex, containing multiple copies of TatA, TatB and TatC subunits, and a separate TatA complex, containing only TatA subunits. Substrates initially bind to the TatABC complex, which probably triggers association of the separate TatA complex to form the active translocon.

Its subcellular location is the cell inner membrane. Its function is as follows. Part of the twin-arginine translocation (Tat) system that transports large folded proteins containing a characteristic twin-arginine motif in their signal peptide across membranes. Together with TatB, TatC is part of a receptor directly interacting with Tat signal peptides. The chain is Sec-independent protein translocase protein TatC from Helicobacter pylori (strain J99 / ATCC 700824) (Campylobacter pylori J99).